The sequence spans 123 residues: Large ribosomal subunit protein uL14 (123 aa).

It belongs to the universal ribosomal protein uL14 family. Part of the 50S ribosomal subunit. Forms a cluster with proteins L3 and L19. In the 70S ribosome, L14 and L19 interact and together make contacts with the 16S rRNA in bridges B5 and B8.

Functionally, binds to 23S rRNA. Forms part of two intersubunit bridges in the 70S ribosome. This chain is Large ribosomal subunit protein uL14, found in Aliivibrio fischeri (strain ATCC 700601 / ES114) (Vibrio fischeri).